Reading from the N-terminus, the 380-residue chain is Epoxyqueuosine reductase (380 aa).

Asp134 (proton donor) is an active-site residue. Positions 179-208 (PPDQPIEDQCGSCTKCIDICPTGALIQGGQ) constitute a 4Fe-4S ferredoxin-type 1 domain. 8 residues coordinate [4Fe-4S] cluster: Cys188, Cys191, Cys194, Cys198, Cys214, Cys240, Cys243, and Cys247. Residues 226 to 258 (PEEYRDKIGNRIYGCDTCQTVCPKNKGMDFHNH) form the 4Fe-4S ferredoxin-type 2 domain.

The protein belongs to the QueG family. As to quaternary structure, monomer. Requires cob(II)alamin as cofactor. [4Fe-4S] cluster serves as cofactor.

The protein localises to the cytoplasm. It carries out the reaction epoxyqueuosine(34) in tRNA + AH2 = queuosine(34) in tRNA + A + H2O. The protein operates within tRNA modification; tRNA-queuosine biosynthesis. Functionally, catalyzes the conversion of epoxyqueuosine (oQ) to queuosine (Q), which is a hypermodified base found in the wobble positions of tRNA(Asp), tRNA(Asn), tRNA(His) and tRNA(Tyr). This chain is Epoxyqueuosine reductase, found in Bacillus anthracis.